A 345-amino-acid polypeptide reads, in one-letter code: Flap endonuclease 1 (345 aa).

The segment at 1-103 is N-domain; it reads MGIKQLSKLL…KELEKRKERR (103 aa). Residue aspartate 34 participates in Mg(2+) binding. Arginine 47 and arginine 69 together coordinate DNA. Mg(2+) is bound by residues aspartate 85, glutamate 157, glutamate 159, aspartate 178, and aspartate 180. The interval 121-252 is I-domain; that stretch reads LMEMYDKRKT…KKALGLIKKH (132 aa). A DNA-binding site is contributed by glutamate 157. Positions 230 and 232 each coordinate DNA. Aspartate 232 contributes to the Mg(2+) binding site. Positions 333–341 are interaction with PCNA; it reads TQGRLDCFI.

The protein belongs to the XPG/RAD2 endonuclease family. FEN1 subfamily. Interacts with PCNA. Three molecules of FEN1 bind to one PCNA trimer with each molecule binding to one PCNA monomer. PCNA stimulates the nuclease activity without altering cleavage specificity. Mg(2+) serves as cofactor. Post-translationally, phosphorylated. Phosphorylation upon DNA damage induces relocalization to the nuclear plasma.

It localises to the nucleus. Its subcellular location is the nucleolus. It is found in the nucleoplasm. The protein resides in the mitochondrion. Its function is as follows. Structure-specific nuclease with 5'-flap endonuclease and 5'-3' exonuclease activities involved in DNA replication and repair. During DNA replication, cleaves the 5'-overhanging flap structure that is generated by displacement synthesis when DNA polymerase encounters the 5'-end of a downstream Okazaki fragment. It enters the flap from the 5'-end and then tracks to cleave the flap base, leaving a nick for ligation. Also involved in the long patch base excision repair (LP-BER) pathway, by cleaving within the apurinic/apyrimidinic (AP) site-terminated flap. Acts as a genome stabilization factor that prevents flaps from equilibrating into structures that lead to duplications and deletions. Also possesses 5'-3' exonuclease activity on nicked or gapped double-stranded DNA, and exhibits RNase H activity. Also involved in replication and repair of rDNA and in repairing mitochondrial DNA. This is Flap endonuclease 1 from Encephalitozoon cuniculi (strain GB-M1) (Microsporidian parasite).